We begin with the raw amino-acid sequence, 544 residues long: Membrane protein insertase YidC (544 aa).

Transmembrane regions (helical) follow at residues 13–33, 343–363, 409–429, 461–481, and 506–526; these read LSLF…SNIL, WGLS…PLTF, LGGC…YSLV, LYFV…FTQL, and MPIM…IYWI.

The protein belongs to the OXA1/ALB3/YidC family. Type 1 subfamily. As to quaternary structure, interacts with the Sec translocase complex via SecD. Specifically interacts with transmembrane segments of nascent integral membrane proteins during membrane integration.

It localises to the cell inner membrane. Required for the insertion and/or proper folding and/or complex formation of integral membrane proteins into the membrane. Involved in integration of membrane proteins that insert both dependently and independently of the Sec translocase complex, as well as at least some lipoproteins. Aids folding of multispanning membrane proteins. In Borreliella burgdorferi (strain ATCC 35210 / DSM 4680 / CIP 102532 / B31) (Borrelia burgdorferi), this protein is Membrane protein insertase YidC.